The following is a 48-amino-acid chain: Large ribosomal subunit protein bL34 (48 aa).

It belongs to the bacterial ribosomal protein bL34 family.

The polypeptide is Large ribosomal subunit protein bL34 (rpmH) (Mycoplasma genitalium (strain ATCC 33530 / DSM 19775 / NCTC 10195 / G37) (Mycoplasmoides genitalium)).